Consider the following 237-residue polypeptide: Oil body-associated protein 2C (237 aa).

Belongs to the OBAP family.

The polypeptide is Oil body-associated protein 2C (Arabidopsis thaliana (Mouse-ear cress)).